Consider the following 418-residue polypeptide: Tyrosine--tRNA ligase (418 aa).

Tyr-39 serves as a coordination point for L-tyrosine. The short motif at 44–53 (CTAASLHVGH) is the 'HIGH' region element. Residues Tyr-176 and Gln-180 each contribute to the L-tyrosine site. A 'KMSKS' region motif is present at residues 236-240 (KMGKT). Lys-239 contacts ATP. Positions 350 to 418 (IGVLVAFAEK…KKKHVLLRLA (69 aa)) constitute an S4 RNA-binding domain.

The protein belongs to the class-I aminoacyl-tRNA synthetase family. TyrS type 1 subfamily. Homodimer.

It is found in the cytoplasm. The enzyme catalyses tRNA(Tyr) + L-tyrosine + ATP = L-tyrosyl-tRNA(Tyr) + AMP + diphosphate + H(+). In terms of biological role, catalyzes the attachment of tyrosine to tRNA(Tyr) in a two-step reaction: tyrosine is first activated by ATP to form Tyr-AMP and then transferred to the acceptor end of tRNA(Tyr). The sequence is that of Tyrosine--tRNA ligase from Rhodopseudomonas palustris (strain ATCC BAA-98 / CGA009).